The sequence spans 64 residues: Small ribosomal subunit protein bS21 (64 aa).

Positions 37–64 (EKPSVKRKRKEKEAQRRLRKKMRMMKKA) are disordered. The span at 53–64 (RLRKKMRMMKKA) shows a compositional bias: basic residues.

Belongs to the bacterial ribosomal protein bS21 family.

The protein is Small ribosomal subunit protein bS21 of Syntrophotalea carbinolica (strain DSM 2380 / NBRC 103641 / GraBd1) (Pelobacter carbinolicus).